Reading from the N-terminus, the 281-residue chain is TIP41-like protein (281 aa).

It belongs to the TIP41 family.

The polypeptide is TIP41-like protein (Caenorhabditis elegans).